The following is a 146-amino-acid chain: Copper transporter 5 (146 aa).

A helical transmembrane segment spans residues 24–44; sequence WLSYILTLIACFVFSAFYQYL. The segment at 55–74 is disordered; that stretch reads SSSRRAPPPPRSSSGVSAPL. A helical transmembrane segment spans residues 101–121; it reads LLMLAAMSFNGGVFIAIVVGL.

The protein belongs to the copper transporter (Ctr) (TC 1.A.56) family. SLC31A subfamily. In terms of tissue distribution, highly expressed in leaves and stems and at lower levels in roots and flowers.

Its subcellular location is the membrane. Its function is as follows. Involved in the transport of copper. This chain is Copper transporter 5 (COPT5), found in Arabidopsis thaliana (Mouse-ear cress).